The sequence spans 328 residues: MGALSAQVKDELIKVSSTKQRSRIAELASIIRFAGSIDSALGKTVIEIELDNEAVAIRVAKEIEELFAISAKLVDLGPMATRRTPRHVVRIAEDAETLIRRVGLVTRSGHAVVGLPPQIISGSISDAEAAWRGAFLAAGQLSDPGRTSGLEVACPCLEASLALVGCARRLGLSAKPKETRGVEKVVIRDGEAVGALLSRMGAHKTRLVWDQKRARREARPLGNRLANFDDANLRRSARAAVAAAARVERAMTILGDDVPDHLAQAGQLRVQHRQASLEELGRLADPQMTKDAVAGRIRRLLHMADKKASDMGIPDTSVVVTEELLDDF.

Residues 276–309 constitute a DNA-binding region (H-T-H motif); the sequence is SLEELGRLADPQMTKDAVAGRIRRLLHMADKKAS.

The protein belongs to the WhiA family.

Functionally, involved in cell division and chromosome segregation. The chain is Probable cell division protein WhiA from Corynebacterium diphtheriae (strain ATCC 700971 / NCTC 13129 / Biotype gravis).